The primary structure comprises 286 residues: ATP-binding protein ChvD (286 aa).

The region spanning 21–85 (KLQDMIDSQN…DLLLLDEPTN (65 aa)) is the ABC transporter domain.

It belongs to the ABC transporter superfamily.

In terms of biological role, the induction of virG by growth under acidic conditions and by phosphate starvation, in the absence of plant inducers, is influenced by ChvD. This Rhizobium radiobacter (Agrobacterium tumefaciens) protein is ATP-binding protein ChvD (chvD).